The chain runs to 159 residues: Ubiquitin-like protein ATG12 (159 aa).

Residues Met-1–Asn-40 form a disordered region. Residues Asn-13–Pro-27 are compositionally biased toward low complexity. A Glycyl lysine isopeptide (Gly-Lys) (interchain with K-218 in ATG5) cross-link involves residue Gly-159.

It belongs to the ATG12 family. In terms of assembly, forms a conjugate with ATG5. Forms a thioester bond with the 'Cys-116' of ATG10. Interacts with the ATG7 C-terminal 40 amino acids domain. The ATG12-ATG5 conjugate forms a complex with several units of ATG16. The ATG12-ATG5 conjugate also associates with ATG3.

It localises to the preautophagosomal structure membrane. Its subcellular location is the cytoplasm. In terms of biological role, ubiquitin-like protein involved in cytoplasm to vacuole transport (Cvt), autophagy vesicles formation, mitophagy, and nucleophagy. Conjugation with ATG5 through a ubiquitin-like conjugating system involving also ATG7 as an E1-like activating enzyme and ATG10 as an E2-like conjugating enzyme, is essential for its function. The ATG12-ATG5 conjugate acts as an E3-like enzyme which is required for lipidation of ATG8 and ATG8 association to the vesicle membranes. ATG12-ATG5 rearranges the ATG3 catalytic center and enhances its E2 activity. Plays a role in sexual development and perithecia formation. The sequence is that of Ubiquitin-like protein ATG12 from Sordaria macrospora (strain ATCC MYA-333 / DSM 997 / K(L3346) / K-hell).